The following is a 543-amino-acid chain: Efflux pump mokI (543 aa).

The next 13 helical transmembrane spans lie at 30 to 50 (LVVTSVTLVVFLMLLDMSIIV), 90 to 110 (LLTLKYTFLAFLGVFEVGSAL), 125 to 145 (AVAGMGGSGLTNGAITILASA), 153 to 173 (LLIGIMMGLSQIAIVCGPLLG), 185 to 205 (CFYINLPVGALAAILLLAIHI), 233 to 253 (LLGFVLFAAFAVMISLALEWG), 261 to 281 (SSVIIGLFCGAGISLVVFGFW), 307 to 327 (LFLGFFSGALLTFSYYLPIYF), 340 to 360 (VYMLPGIGGQIVMAIVSGAII), 364 to 384 (GYYIPWALASGIIVSISAGLV), 394 to 416 (AAWVMYQFMGGFGRGCGMQTPII), 428 to 448 (ALGISLAMFGQTFGGSLFLTL), and 509 to 529 (VGASGATFLFAWGMGQVGLIW).

It belongs to the major facilitator superfamily. TCR/Tet family.

It is found in the membrane. Efflux pump; part of the gene cluster that mediates the biosynthesis of monakolin K, also known as lovastatin, and which acts as a potent competitive inhibitor of HMG-CoA reductase. The protein is Efflux pump mokI of Monascus pilosus (Red mold).